Reading from the N-terminus, the 447-residue chain is MPGSLIDTRQQPLSVGIVGGGIIGVILAAGLVRRGIDVKVFEQARGFREIGAGMAFTANAVRCMEMLDPAIVWALRSSGAVPISIGDHQAEARDYLRWVDGYHESSKRLYQLDAGIRGFEACRRDQFLEALVKVLPEGIVECQKRLQKIHEKNETEKVTLEFADGTFAHVDCVIGADGIRSRVRQHLFGEDSPYSHPHYSHKFAFRGLITMENAISALGEDKARTLNMHVGPNAHLIHYPVANETMVNIAAFVSDPEEWPDKLSLVGPATREEAMGYFANWNPGLRAVLGFMPENIDRWAMFDTYDYPAPFFSRGKICLVGDAAHAAVPHHGAGACIGIEDALCATVLLAEVFVSTRGKSSIVRNRAIAAAFGSFNAVRRVRAQWFVDSSRRVCDLYQQPEWADPQKRIKAENCFEEIKDRSHKIWHFDYNSMLQEAIEKYRHNMGS.

A helical membrane pass occupies residues 12 to 32 (PLSVGIVGGGIIGVILAAGLV). FAD-binding residues include Glu42, Ala55, and Arg124. Asn153 is a glycosylation site (N-linked (GlcNAc...) asparagine). Catalysis depends on residues Arg206 and Tyr239. The N-linked (GlcNAc...) asparagine glycan is linked to Asn243. FAD contacts are provided by Asp322 and Ala335.

Belongs to the paxM FAD-dependent monooxygenase family. FAD is required as a cofactor.

Its subcellular location is the membrane. Its pathway is secondary metabolite biosynthesis. In terms of biological role, FAD-dependent monooxygenase; part of the gene cluster that mediates the biosynthesis of the tropolone class of fungal maleic anhydrides. Within the pathway, tropB catalyzes a synthetically challenging asymmetric oxidative dearomatization reaction to convert 3-methylorcinaldehyde into a hydroxycyclohexadione. The pathway begins with the synthesis of 3-methylorcinaldehyde by the non-reducing polyketide synthase (PKS) tropA. 3-methylorcinaldehyde is the substrate for the FAD-dependent monooxygenase tropB to yield a dearomatized hydroxycyclohexadione. The 2-oxoglutarate-dependent dioxygenase tropC then performs the oxidative ring expansion to provide the first tropolone metabolite stipitaldehyde. Trop D converts stipitaldehyde into stipitacetal which is in turn converted to stipitalide by the short-chain dehydrogenase/reductase tropE. The next steps involve tropF, tropG, tropH, tropI and tropJ to form successive tropolone maleic anhydrides including stipitaldehydic, stipitatonic and stipitatic acids. This Talaromyces stipitatus (strain ATCC 10500 / CBS 375.48 / QM 6759 / NRRL 1006) (Penicillium stipitatum) protein is FAD-dependent monooxygenase tropB.